An 808-amino-acid chain; its full sequence is Spindle assembly abnormal protein 4 (808 aa).

The segment at 1–151 (MASDENIGAD…PDEPSTLVNS (151 aa)) is disordered. Over residues 42–54 (PPTSELSSASSPS) the composition is skewed to low complexity. Composition is skewed to polar residues over residues 61–78 (SLSNALPNSARTVDSGIS) and 85–104 (PPTTASLPMDQPSLSSSPEN). The span at 113 to 123 (AEEHGHSGQHA) shows a compositional bias: basic and acidic residues. A compositionally biased stretch (acidic residues) spans 124-133 (EEEEDNDTDE). Residues 161-181 (KYKNAAAEFKAFERRMDSMRS) are a coiled coil. Disordered regions lie at residues 187–206 (TSLATPSSCAPSNSSEPPTR) and 271–298 (VTAPLRRNDMMNSSRQNPQNGNVQDENR). Residues 280–294 (MMNSSRQNPQNGNVQ) are compositionally biased toward polar residues. Residues 314 to 503 (LDRQKLEIEI…ERDDKEKEMF (190 aa)) adopt a coiled-coil conformation. Polar residues predominate over residues 511–529 (KTSNPVPPVLNQSVPISIT). The interval 511–564 (KTSNPVPPVLNQSVPISITSNGPSRHPSSSSLTTFRKPSTSNRERGVSWADEPN) is disordered. A compositionally biased stretch (low complexity) spans 530–541 (SNGPSRHPSSSS). Polar residues predominate over residues 542–551 (LTTFRKPSTS).

In terms of assembly, interacts with hyls-1; leading to hyls-1 localization into newly forming centrioles.

It localises to the cytoplasm. The protein localises to the cytoskeleton. The protein resides in the microtubule organizing center. Its subcellular location is the centrosome. Its function is as follows. Required for centrosome duplication. Plays a central role in determining centrosome size. This is Spindle assembly abnormal protein 4 (sas-4) from Caenorhabditis elegans.